We begin with the raw amino-acid sequence, 207 residues long: NAD(P)H-quinone oxidoreductase subunit K, chloroplastic (207 aa).

[4Fe-4S] cluster is bound by residues Cys47, Cys48, Cys112, and Cys143.

The protein belongs to the complex I 20 kDa subunit family. As to quaternary structure, NDH is composed of at least 16 different subunits, 5 of which are encoded in the nucleus. Requires [4Fe-4S] cluster as cofactor.

Its subcellular location is the plastid. The protein localises to the chloroplast thylakoid membrane. It carries out the reaction a plastoquinone + NADH + (n+1) H(+)(in) = a plastoquinol + NAD(+) + n H(+)(out). The enzyme catalyses a plastoquinone + NADPH + (n+1) H(+)(in) = a plastoquinol + NADP(+) + n H(+)(out). Its function is as follows. NDH shuttles electrons from NAD(P)H:plastoquinone, via FMN and iron-sulfur (Fe-S) centers, to quinones in the photosynthetic chain and possibly in a chloroplast respiratory chain. The immediate electron acceptor for the enzyme in this species is believed to be plastoquinone. Couples the redox reaction to proton translocation, and thus conserves the redox energy in a proton gradient. The chain is NAD(P)H-quinone oxidoreductase subunit K, chloroplastic from Psilotum nudum (Whisk fern).